We begin with the raw amino-acid sequence, 66 residues long: Beta-mammal toxin Cv1 (66 aa).

Residues 1 to 66 (KEGYIVNLST…VWPLPKKTCN (66 aa)) enclose the LCN-type CS-alpha/beta domain. Disulfide bonds link C12-C65, C16-C41, C25-C46, and C29-C48.

In terms of tissue distribution, expressed by the venom gland.

The protein resides in the secreted. With respect to regulation, is susceptible to be neutralized by human antibodies scFvs 10FG2 and HV. Functionally, beta toxins bind voltage-independently at site-4 of sodium channels (Nav) and reduces peak current and shifts the voltage of activation toward more negative potentials thereby affecting sodium channel activation and promoting spontaneous and repetitive firing. This toxin is slightly toxic to mice. This Centruroides villegasi (Scorpion) protein is Beta-mammal toxin Cv1.